A 493-amino-acid polypeptide reads, in one-letter code: UDP-N-acetylmuramate--L-alanine ligase (493 aa).

Glycine 112–threonine 118 is a binding site for ATP.

It belongs to the MurCDEF family.

The protein resides in the cytoplasm. The enzyme catalyses UDP-N-acetyl-alpha-D-muramate + L-alanine + ATP = UDP-N-acetyl-alpha-D-muramoyl-L-alanine + ADP + phosphate + H(+). It participates in cell wall biogenesis; peptidoglycan biosynthesis. In terms of biological role, cell wall formation. The protein is UDP-N-acetylmuramate--L-alanine ligase of Nitrosospira multiformis (strain ATCC 25196 / NCIMB 11849 / C 71).